We begin with the raw amino-acid sequence, 65 residues long: Muscarinic toxin-like protein 3 (65 aa).

4 cysteine pairs are disulfide-bonded: cysteine 3-cysteine 24, cysteine 17-cysteine 41, cysteine 45-cysteine 57, and cysteine 58-cysteine 63.

In terms of assembly, homodimer; non-covalently linked. In terms of tissue distribution, expressed by the venom gland.

Its subcellular location is the secreted. Antagonist of muscle and neuronal nicotinic acetylcholine receptors (nAChR) with highest affinity for neuronal alpha-7/CHRNA7 nAChRs. The polypeptide is Muscarinic toxin-like protein 3 (Naja kaouthia (Monocled cobra)).